We begin with the raw amino-acid sequence, 289 residues long: Elongation factor Ts (289 aa).

The segment at 82 to 85 (TDFL) is involved in Mg(2+) ion dislocation from EF-Tu.

This sequence belongs to the EF-Ts family.

The protein resides in the cytoplasm. Functionally, associates with the EF-Tu.GDP complex and induces the exchange of GDP to GTP. It remains bound to the aminoacyl-tRNA.EF-Tu.GTP complex up to the GTP hydrolysis stage on the ribosome. In Pseudomonas aeruginosa (strain LESB58), this protein is Elongation factor Ts.